The following is a 61-amino-acid chain: Large ribosomal subunit protein uL30 (61 aa).

This sequence belongs to the universal ribosomal protein uL30 family. As to quaternary structure, part of the 50S ribosomal subunit.

This chain is Large ribosomal subunit protein uL30, found in Shewanella piezotolerans (strain WP3 / JCM 13877).